Here is a 331-residue protein sequence, read N- to C-terminus: tRNA (guanine-N(7)-)-methyltransferase (331 aa).

S-adenosyl-L-methionine is bound by residues glutamate 29, glutamate 55, and aspartate 105. Residue aspartate 105 is part of the active site. Substrate is bound by residues lysine 109 and aspartate 141.

It belongs to the class I-like SAM-binding methyltransferase superfamily. TrmB family.

It carries out the reaction guanosine(46) in tRNA + S-adenosyl-L-methionine = N(7)-methylguanosine(46) in tRNA + S-adenosyl-L-homocysteine. Its pathway is tRNA modification; N(7)-methylguanine-tRNA biosynthesis. Catalyzes the formation of N(7)-methylguanine at position 46 (m7G46) in tRNA. This is tRNA (guanine-N(7)-)-methyltransferase from Deinococcus geothermalis (strain DSM 11300 / CIP 105573 / AG-3a).